Reading from the N-terminus, the 427-residue chain is Trigger factor (427 aa).

The 86-residue stretch at 163–248 folds into the PPIase FKBP-type domain; sequence GDTVVIDFVG…IHEVKEKEVP (86 aa).

It belongs to the FKBP-type PPIase family. Tig subfamily.

It is found in the cytoplasm. The catalysed reaction is [protein]-peptidylproline (omega=180) = [protein]-peptidylproline (omega=0). Its function is as follows. Involved in protein export. Acts as a chaperone by maintaining the newly synthesized protein in an open conformation. Functions as a peptidyl-prolyl cis-trans isomerase. The protein is Trigger factor of Streptococcus sanguinis (strain SK36).